Consider the following 384-residue polypeptide: 4-hydroxy-3-methylbut-2-en-1-yl diphosphate synthase (flavodoxin) 1 (384 aa).

The [4Fe-4S] cluster site is built by Cys281, Cys284, Cys316, and Glu323.

This sequence belongs to the IspG family. It depends on [4Fe-4S] cluster as a cofactor.

The catalysed reaction is (2E)-4-hydroxy-3-methylbut-2-enyl diphosphate + oxidized [flavodoxin] + H2O + 2 H(+) = 2-C-methyl-D-erythritol 2,4-cyclic diphosphate + reduced [flavodoxin]. It functions in the pathway isoprenoid biosynthesis; isopentenyl diphosphate biosynthesis via DXP pathway; isopentenyl diphosphate from 1-deoxy-D-xylulose 5-phosphate: step 5/6. Converts 2C-methyl-D-erythritol 2,4-cyclodiphosphate (ME-2,4cPP) into 1-hydroxy-2-methyl-2-(E)-butenyl 4-diphosphate. The chain is 4-hydroxy-3-methylbut-2-en-1-yl diphosphate synthase (flavodoxin) 1 from Streptomyces coelicolor (strain ATCC BAA-471 / A3(2) / M145).